The chain runs to 421 residues: Histidine--tRNA ligase (421 aa).

The protein belongs to the class-II aminoacyl-tRNA synthetase family. As to quaternary structure, homodimer.

The protein resides in the cytoplasm. It carries out the reaction tRNA(His) + L-histidine + ATP = L-histidyl-tRNA(His) + AMP + diphosphate + H(+). This chain is Histidine--tRNA ligase, found in Ureaplasma urealyticum serovar 10 (strain ATCC 33699 / Western).